Here is a 233-residue protein sequence, read N- to C-terminus: Biosynthetic peptidoglycan transglycosylase (233 aa).

A helical membrane pass occupies residues 17–37 (IVLAVLALVILPYALIFFYVL).

It belongs to the glycosyltransferase 51 family.

The protein localises to the cell inner membrane. The enzyme catalyses [GlcNAc-(1-&gt;4)-Mur2Ac(oyl-L-Ala-gamma-D-Glu-L-Lys-D-Ala-D-Ala)](n)-di-trans,octa-cis-undecaprenyl diphosphate + beta-D-GlcNAc-(1-&gt;4)-Mur2Ac(oyl-L-Ala-gamma-D-Glu-L-Lys-D-Ala-D-Ala)-di-trans,octa-cis-undecaprenyl diphosphate = [GlcNAc-(1-&gt;4)-Mur2Ac(oyl-L-Ala-gamma-D-Glu-L-Lys-D-Ala-D-Ala)](n+1)-di-trans,octa-cis-undecaprenyl diphosphate + di-trans,octa-cis-undecaprenyl diphosphate + H(+). It participates in cell wall biogenesis; peptidoglycan biosynthesis. Peptidoglycan polymerase that catalyzes glycan chain elongation from lipid-linked precursors. This chain is Biosynthetic peptidoglycan transglycosylase, found in Rhizobium leguminosarum bv. trifolii (strain WSM2304).